Reading from the N-terminus, the 997-residue chain is MAKFTLSSTGYCWLNNRGQSHDDVLGVVTHLDHMVTLLLVELHHCNKLSLPGAPAPPAPCLEHLLSENLLDKLYEWGVKTGRYGNAVRLEQLKLYEQLVSHSRHQLLVHEPFLRPLLKILDSSQNEIYPPDVEKRLVILLNQLCVALMQNVHLLDLFFFSNAQQNGNGGHTNFIIFSLLIPYVHREGSLGHQARDALLLCMALSQKNSNVGKYIATYSSICPVLVTGLGGLYSRLPNQIDIKSVDWYRITTDDVTEMPELTLFMNSLEFCNAVVQVAHTAIRQQLLDFLYQGFLVPVLGPAILQTNVESQVSAMAYLDLIVRSVSEPGLIQIIVRFLLDTDKFDGQRILDVLVERLNSNDSRLCMITLSLFDTLLALNCEDLMLELMLKYLLNCQHVPISHRYKVNRSDPYGSAVEYFLNVAPDIMKKVNNVLNTNNYNGNGSSAGNGGRQTISKTIGANWNHYGMNTGETLLASYQAYLLDARNRITQCKHACDQWNNIYRYQKLSKLVNSGVNGGGHSGEDVRTYKVQMIKNFLAEFTTTAPDSAVELLLDQQQQDHRSSQCQSPAQQHLHQQQQLQATTKQLDSLQSLGDSSGYESLNIMTICSGGGSAGGSEDGRRHESWKVSSVKEDTVVDLDLSEDLFAQGTVSLGPFLTAIWGKLQTFTSNCLYVNLHLTGLISHLAWFPLPLLHSILLRPDIPTTSDTPSFHQVLKILKQQIDAELPECEESLEIVDVARSFLVDREFRLINMRKNAIESNVVLGGSGPGGPRLSNGGGGTGSSITSSLSQTTPMQLTPSSSYDPFKRNDTKRKSITNSFSSIFRRPGSSGGSNSNNSTSGSLGGSSSVTPSLSASQHHLPPSGSGSSNSSPSTTTTTGSSGVSSLLMVGSSRRESREAETQFMDHPSLPVGIGSGTVGGGGAAGPASLTSMAQPGSGHSSLEYSLVNGVGSERQRDLAVCAVVLDEWLKELSAITQEQSLVMVAAATSEQQPNRSVVS.

Disordered stretches follow at residues 558 to 579 (DHRS…QQLQ) and 759 to 922 (NVVL…GGAA). Positions 569–579 (QQHLHQQQQLQ) are enriched in low complexity. The span at 763-780 (GGSGPGGPRLSNGGGGTG) shows a compositional bias: gly residues. Low complexity-rich tracts occupy residues 781–792 (SSITSSLSQTTP) and 830–889 (GSNS…MVGS). The segment covering 911 to 922 (IGSGTVGGGGAA) has biased composition (gly residues).

It belongs to the FHIP family.

The polypeptide is FHIP family protein CPIJ015043 (Culex quinquefasciatus (Southern house mosquito)).